The primary structure comprises 159 residues: Protein Smg homolog (159 aa).

The protein belongs to the Smg family.

The polypeptide is Protein Smg homolog (Vibrio vulnificus (strain CMCP6)).